Here is a 248-residue protein sequence, read N- to C-terminus: MRKPIIAGNWKMNKVSKEALDLVNQIKDEVHKTEVEVVVCCPFTVLSQVQKALVGTNLKLGAQNMHWEEDGAYTGEISANMLKDIGVEYVILGHSERRQYFNETDETVNKKVKKAIKENLKPIVCIGESLEEREANQTFDVIKKQLLGAFEGVPAEAMDNVVLAYEPIWAIGTGKTASSEEAQTVIAYIRSLIEEKYGVDISEEVRIQYGGSVKASNATEIMNETDIDGALVGGASLKAEEFLGIINF.

Position 9 to 11 (9 to 11 (NWK)) interacts with substrate. Catalysis depends on histidine 94, which acts as the Electrophile. Glutamate 166 functions as the Proton acceptor in the catalytic mechanism. Residues glycine 172, serine 212, and 233–234 (GG) each bind substrate.

This sequence belongs to the triosephosphate isomerase family. In terms of assembly, homodimer.

It is found in the cytoplasm. It carries out the reaction D-glyceraldehyde 3-phosphate = dihydroxyacetone phosphate. It participates in carbohydrate biosynthesis; gluconeogenesis. It functions in the pathway carbohydrate degradation; glycolysis; D-glyceraldehyde 3-phosphate from glycerone phosphate: step 1/1. Functionally, involved in the gluconeogenesis. Catalyzes stereospecifically the conversion of dihydroxyacetone phosphate (DHAP) to D-glyceraldehyde-3-phosphate (G3P). The protein is Triosephosphate isomerase of Alkaliphilus oremlandii (strain OhILAs) (Clostridium oremlandii (strain OhILAs)).